A 457-amino-acid chain; its full sequence is Multidrug resistance protein MdtK (457 aa).

The next 12 helical transmembrane spans lie at 11-31, 53-73, 93-113, 127-147, 160-180, 191-211, 243-263, 276-296, 316-336, 357-377, 387-407, and 418-438; these read LLAL…MGFV, IWLP…PVVA, WLAG…GYII, AVGY…FQVA, GMVM…IFIY, VGCG…MLWW, LPIA…ALLV, IALN…AAVT, RTGV…TVLM, LMLL…GSGI, IFFI…YLLA, and PAGF…MMML.

It belongs to the multi antimicrobial extrusion (MATE) (TC 2.A.66.1) family. MdtK subfamily.

It localises to the cell inner membrane. In terms of biological role, multidrug efflux pump that functions probably as a Na(+)/drug antiporter. This is Multidrug resistance protein MdtK from Klebsiella pneumoniae subsp. pneumoniae (strain ATCC 700721 / MGH 78578).